Reading from the N-terminus, the 405-residue chain is Deoxyguanosinetriphosphate triphosphohydrolase-like protein (405 aa).

The HD domain occupies 75-219 (RLTHTIEVAQ…AAIADDIAYN (145 aa)).

The protein belongs to the dGTPase family. Type 2 subfamily.

This is Deoxyguanosinetriphosphate triphosphohydrolase-like protein from Rhizobium johnstonii (strain DSM 114642 / LMG 32736 / 3841) (Rhizobium leguminosarum bv. viciae).